The sequence spans 725 residues: Ribonuclease Y (725 aa).

Residues 4–24 (VLVILLSLVLLVLVALILAVA) traverse the membrane as a helical segment. Disordered stretches follow at residues 62 to 140 (DGPA…ASDT), 165 to 195 (VAAT…SVRR), and 300 to 321 (EQRV…AGRE). 2 stretches are compositionally biased toward low complexity: residues 84–100 (DAPG…PDAG) and 114–137 (AAAP…PADA). The region spanning 415–481 (VVTVLHLPGD…RITLAALVSD (67 aa)) is the KH domain. The region spanning 541–634 (VLAHLIESAH…TQAADQISGG (94 aa)) is the HD domain.

This sequence belongs to the RNase Y family.

It is found in the cell membrane. In terms of biological role, endoribonuclease that initiates mRNA decay. This is Ribonuclease Y from Frankia alni (strain DSM 45986 / CECT 9034 / ACN14a).